A 391-amino-acid polypeptide reads, in one-letter code: Na(+)/H(+) antiporter NhaA (391 aa).

11 helical membrane passes run 14–34 (AGGILLMVSVVLAMILANSPL), 59–79 (LIHWINDGLMAIFFMLIGLEV), 95–115 (SLPTFAAIGGMVFPAAVYLIF), 124–144 (VGWAIPAATDIAFALGIMALL), 154–174 (VFLLALAIIDDLGVVVIIALF), 177–197 (TDLSTISLIIAAAAILGLIGL), 213–233 (LILWIAVLKSGVHATLAGVII), 261–281 (FIILPIFAFANAGVDLSGMSL), 292–312 (IALGLLVGKPLGIMLFSYIAV), 331–351 (VAVMCGIGFTMSMFISSLAFV), and 363–383 (LGILLGSIASATIGYFWLSKV).

This sequence belongs to the NhaA Na(+)/H(+) (TC 2.A.33) antiporter family.

The protein localises to the cell inner membrane. The enzyme catalyses Na(+)(in) + 2 H(+)(out) = Na(+)(out) + 2 H(+)(in). Functionally, na(+)/H(+) antiporter that extrudes sodium in exchange for external protons. The sequence is that of Na(+)/H(+) antiporter NhaA from Shewanella pealeana (strain ATCC 700345 / ANG-SQ1).